Consider the following 275-residue polypeptide: Collectin-10 (275 aa).

The N-terminal stretch at 1-25 (MKYGKLWPIGVSVLGVIALHVRVLS) is a signal peptide. N-linked (GlcNAc...) asparagine glycosylation is present at Asn-30. The disordered stretch occupies residues 39 to 76 (THTILPGPKGDDGEAGDTGVLGKLGKDGPKGQKGNKGI). The Collagen-like domain occupies 51–110 (GEAGDTGVLGKLGKDGPKGQKGNKGIIGDSGDLGLIGKIGPIGSKGDKGHKGLPGLPGGK). A C-type lectin domain is found at 153 to 269 (TDEKYYYIVR…CSLTIYFVCE (117 aa)). 2 disulfide bridges follow: Cys-174–Cys-268 and Cys-246–Cys-260.

The protein belongs to the COLEC10/COLEC11 family.

It localises to the secreted. Functionally, lectin that binds to various sugars: galactose &gt; mannose = fucose &gt; N-acetylglucosamine &gt; N-acetylgalactosamine. This is Collectin-10 (colec10) from Xenopus tropicalis (Western clawed frog).